The primary structure comprises 411 residues: Glutamate dehydrogenase (411 aa).

Lysine 102 is an active-site residue.

Belongs to the Glu/Leu/Phe/Val dehydrogenases family.

The catalysed reaction is L-glutamate + NAD(+) + H2O = 2-oxoglutarate + NH4(+) + NADH + H(+). It carries out the reaction L-glutamate + NADP(+) + H2O = 2-oxoglutarate + NH4(+) + NADPH + H(+). The sequence is that of Glutamate dehydrogenase (GDH1) from Zea mays (Maize).